The chain runs to 292 residues: MKDKVLKLGLPKGSLQETTLKLFKKAGYNIHVSHRSYYPVIDDEEISGMLLRAQEVPVYVEKGYLDCGLTGYDWILEQNVDVIEVAELRYAKEGFRPVKWVIAVPEDSPIKTVEDLQGKRIATELVGYTKRYLKSKGIKAEVYFSWGATEVKPPYLADAIVDLTETGTSLKANKLRVIETILESTTRFITNKNAWKNSWKKKKMQDIAMLLQGALLAEEKVGLKMNVPKDSLKKVLCLLNSLHSPTISQLYDEEWYAVEVIINEKKVRELLPKLKDAGASGFVEYPLNKVIP.

This sequence belongs to the ATP phosphoribosyltransferase family. Long subfamily. It depends on Mg(2+) as a cofactor.

Its subcellular location is the cytoplasm. It carries out the reaction 1-(5-phospho-beta-D-ribosyl)-ATP + diphosphate = 5-phospho-alpha-D-ribose 1-diphosphate + ATP. It functions in the pathway amino-acid biosynthesis; L-histidine biosynthesis; L-histidine from 5-phospho-alpha-D-ribose 1-diphosphate: step 1/9. Feedback inhibited by histidine. Functionally, catalyzes the condensation of ATP and 5-phosphoribose 1-diphosphate to form N'-(5'-phosphoribosyl)-ATP (PR-ATP). Has a crucial role in the pathway because the rate of histidine biosynthesis seems to be controlled primarily by regulation of HisG enzymatic activity. The protein is ATP phosphoribosyltransferase of Thermodesulfovibrio yellowstonii (strain ATCC 51303 / DSM 11347 / YP87).